Here is a 254-residue protein sequence, read N- to C-terminus: Geranylgeranylglyceryl phosphate synthase (254 aa).

Positions 27 and 56 each coordinate Mg(2+). Residues 174–180 (YLEAGSG), 212–213 (GG), and 234–235 (GT) contribute to the sn-glycerol 1-phosphate site.

Belongs to the GGGP/HepGP synthase family. Group II subfamily. As to quaternary structure, homohexamer. It depends on Mg(2+) as a cofactor.

The protein localises to the cytoplasm. The catalysed reaction is sn-glycerol 1-phosphate + (2E,6E,10E)-geranylgeranyl diphosphate = sn-3-O-(geranylgeranyl)glycerol 1-phosphate + diphosphate. It functions in the pathway membrane lipid metabolism; glycerophospholipid metabolism. Functionally, prenyltransferase that catalyzes the transfer of the geranylgeranyl moiety of geranylgeranyl diphosphate (GGPP) to the C3 hydroxyl of sn-glycerol-1-phosphate (G1P). This reaction is the first ether-bond-formation step in the biosynthesis of archaeal membrane lipids. The chain is Geranylgeranylglyceryl phosphate synthase from Aeropyrum pernix (strain ATCC 700893 / DSM 11879 / JCM 9820 / NBRC 100138 / K1).